Reading from the N-terminus, the 345-residue chain is DNA primase small subunit PriS (345 aa).

Catalysis depends on residues Asp-95 and Asp-97. Cys-106, His-108, Cys-114, and Cys-117 together coordinate Zn(2+). The short motif at 106–117 (CNHEPGKVCPIC) is the Zinc knuckle motif element. Asp-280 is a catalytic residue.

This sequence belongs to the eukaryotic-type primase small subunit family. As to quaternary structure, heterodimer of a small subunit (PriS) and a large subunit (PriL). Mg(2+) serves as cofactor. Requires Mn(2+) as cofactor.

Its function is as follows. Catalytic subunit of DNA primase, an RNA polymerase that catalyzes the synthesis of short RNA molecules used as primers for DNA polymerase during DNA replication. The small subunit contains the primase catalytic core and has DNA synthesis activity on its own, synthesizing DNA strands up to 3 kB. Binding to the large subunit stabilizes and modulates the activity, increasing the rate of DNA synthesis while decreasing the length of the DNA fragments, and conferring RNA synthesis capability for RNA fragments up to 150 bases. The DNA polymerase activity may enable DNA primase to also catalyze primer extension after primer synthesis. May also play a role in DNA repair. Displays gap-filling and strand-displacement activities. The protein is DNA primase small subunit PriS of Pyrococcus abyssi (strain GE5 / Orsay).